Consider the following 406-residue polypeptide: Zinc metalloprotease Rip1 (406 aa).

A helical transmembrane segment spans residues 1–21 (MMFGIGIVLFALAILVSVALH). H21 contributes to the Zn(2+) binding site. Residue E22 is part of the active site. Position 25 (H25) interacts with Zn(2+). Residues 108 to 128 (PAMNFVIGLVLIYGIAIVWGL) form a helical membrane-spanning segment. The region spanning 125–209 (VWGLPNLHQP…RIEFKRDGRV (85 aa)) is the PDZ domain. D206 contacts Zn(2+). Transmembrane regions (helical) follow at residues 327–349 (NFVL…IAVA) and 375–395 (LMPA…LTVT).

This sequence belongs to the peptidase M50B family. The cofactor is Zn(2+).

The protein resides in the cell membrane. Proteolysis is inhibited by Wag31; when Wag31 is non-functional oxidative stress increases proteolysis. Functionally, a probable intramembrane site-2 protease (S2P) that cleaves type-2 transmembrane proteins within their membrane-spanning domains. Degrades PbpB (PBP3, FtsI) under conditions of oxidatives stress; degradation is inhibited by Wag31-PbpB interaction. Also cleaves anti-sigma factors RskA, RslA and RslM. Site-1 proteases have not yet been identified in this organism. Its function is as follows. Regulated intramembrane proteolysis (RIP) occurs when an extracytoplasmic signal (possibly oxidative stress) triggers a concerted proteolytic cascade to transmit information and elicit cellular responses. The membrane-spanning regulatory substrate protein (includes anti-sigma factors RskA, RslA, RsmA, and PbpB) is first cut extracytoplasmically (site-1 protease, S1P), then within the membrane itself (site-2 protease, S2P, this entry), while cytoplasmic proteases finish degrading the regulatory protein, liberating the effector protein (ECF sigma factors SigK, SigL and SigM). This Mycolicibacterium smegmatis (strain ATCC 700084 / mc(2)155) (Mycobacterium smegmatis) protein is Zinc metalloprotease Rip1 (rip1).